The sequence spans 144 residues: Large ribosomal subunit protein uL16 (144 aa).

Over residues 1–19 (MLLPKRVKYRRQHRPKTTG) the composition is skewed to basic residues. Positions 1 to 23 (MLLPKRVKYRRQHRPKTTGRSKG) are disordered.

This sequence belongs to the universal ribosomal protein uL16 family. As to quaternary structure, part of the 50S ribosomal subunit.

Functionally, binds 23S rRNA and is also seen to make contacts with the A and possibly P site tRNAs. The polypeptide is Large ribosomal subunit protein uL16 (Staphylococcus haemolyticus (strain JCSC1435)).